Reading from the N-terminus, the 104-residue chain is Larval cuticle protein 65Ab1 (104 aa).

The first 18 residues, 1–18 (MKFLIVFVALFAMAVARP), serve as a signal peptide directing secretion. The region spanning 32–102 (PEKWSSDVET…PQGAHLPVAP (71 aa)) is the Chitin-binding type R&amp;R domain.

Its function is as follows. Component of the cuticle of the larva. This Drosophila melanogaster (Fruit fly) protein is Larval cuticle protein 65Ab1.